A 350-amino-acid polypeptide reads, in one-letter code: 3-dehydroquinate synthase (350 aa).

Residues 106–110 (GVVGD), 130–131 (TS), K143, and K152 contribute to the NAD(+) site. Residues E185, H246, and H263 each coordinate Zn(2+).

Belongs to the sugar phosphate cyclases superfamily. Dehydroquinate synthase family. NAD(+) serves as cofactor. Requires Co(2+) as cofactor. Zn(2+) is required as a cofactor.

The protein resides in the cytoplasm. It catalyses the reaction 7-phospho-2-dehydro-3-deoxy-D-arabino-heptonate = 3-dehydroquinate + phosphate. Its pathway is metabolic intermediate biosynthesis; chorismate biosynthesis; chorismate from D-erythrose 4-phosphate and phosphoenolpyruvate: step 2/7. Functionally, catalyzes the conversion of 3-deoxy-D-arabino-heptulosonate 7-phosphate (DAHP) to dehydroquinate (DHQ). The sequence is that of 3-dehydroquinate synthase from Clostridium perfringens (strain 13 / Type A).